The chain runs to 203 residues: uncharacterized protein (203 aa).

This is an uncharacterized protein from Magallana gigas (Pacific oyster).